The chain runs to 171 residues: RNA pyrophosphohydrolase (171 aa).

In terms of domain architecture, Nudix hydrolase spans 6 to 149 (GFRPNVGIIL…KREVYRRALK (144 aa)). The Nudix box signature appears at 39 to 60 (GGIKESESAEQALYRELQEEVG).

The protein belongs to the Nudix hydrolase family. RppH subfamily. A divalent metal cation is required as a cofactor.

Functionally, accelerates the degradation of transcripts by removing pyrophosphate from the 5'-end of triphosphorylated RNA, leading to a more labile monophosphorylated state that can stimulate subsequent ribonuclease cleavage. This is RNA pyrophosphohydrolase from Teredinibacter turnerae (strain ATCC 39867 / T7901).